The sequence spans 59 residues: Inner kinetochore subunit fta6 (59 aa).

Component of the inner kinetochore constitutive centromere-associated network (CCAN) (also known as central kinetochore Sim4 complex in fission yeast), which is composed of at least cnl2, cnp3, cnp20, fta1, fta2, fta3, fta4, fta6, fta7, mal2, mhf1, mhf2, mis6, mis15, mis17, sim4 and wip1.

Its subcellular location is the nucleus. The protein localises to the chromosome. It localises to the centromere. It is found in the kinetochore. The protein resides in the cytoplasm. Its subcellular location is the cytoskeleton. The protein localises to the microtubule organizing center. It localises to the spindle pole body. In terms of biological role, component of the kinetochore, a multiprotein complex that assembles on centromeric DNA and attaches chromosomes to spindle microtubules, mediating chromosome segregation and sister chromatid segregation during meiosis and mitosis. Component of the inner kinetochore constitutive centromere-associated network (CCAN), which serves as a structural platform for outer kinetochore assembly. This chain is Inner kinetochore subunit fta6 (fta6), found in Schizosaccharomyces pombe (strain 972 / ATCC 24843) (Fission yeast).